Consider the following 760-residue polypeptide: Alpha-amylase (760 aa).

The signal sequence occupies residues 1-34; the sequence is MSKRSKLLKRRMLSLSVICVLIGYGPVFNPVRSQ. Ca(2+) is bound by residues asparagine 143, threonine 184, and aspartate 192. The active-site Nucleophile is aspartate 222. Histidine 226 is a binding site for Ca(2+). Glutamate 262 (proton donor) is an active-site residue.

This sequence belongs to the glycosyl hydrolase 13 family. Monomer. The cofactor is Ca(2+).

The catalysed reaction is Endohydrolysis of (1-&gt;4)-alpha-D-glucosidic linkages in polysaccharides containing three or more (1-&gt;4)-alpha-linked D-glucose units.. The polypeptide is Alpha-amylase (amyA) (Clostridium acetobutylicum (strain ATCC 824 / DSM 792 / JCM 1419 / IAM 19013 / LMG 5710 / NBRC 13948 / NRRL B-527 / VKM B-1787 / 2291 / W)).